A 190-amino-acid chain; its full sequence is Ras-like GTP-binding protein RhoL (190 aa).

18-25 is a GTP binding site; it reads GDGMVGKT. The short motif at 40–48 is the Effector region element; the sequence is YIPTVFDNH. GTP is bound by residues 65-69 and 123-126; these read DTAGQ and TKLD. Cys-187 carries the cysteine methyl ester modification. Cys-187 carries S-geranylgeranyl cysteine lipidation. Residues 188-190 constitute a propeptide, removed in mature form; that stretch reads KIL.

Belongs to the small GTPase superfamily. Rho family. As to expression, highly expressed in the embryonic cephalic mesoderm starting from stage 6 and fading by stage 11. Hemocyte precursor cells.

It is found in the cell membrane. Functionally, essential for the maturation of hemocytes. This is Ras-like GTP-binding protein RhoL (RhoL) from Drosophila melanogaster (Fruit fly).